Consider the following 245-residue polypeptide: Aquaporin SIP1-1 (245 aa).

Helical transmembrane passes span 14-34 and 55-75; these read AVVT…TAAV and LLSV…GASF. Residues 76–78 carry the NPA 1 motif; it reads NPT. 3 helical membrane-spanning segments follow: residues 100–120, 138–158, and 164–184; these read FPAQ…LMPA, GALA…WVIV, and VILK…AGAE. The NPA 2 signature appears at 191 to 193; sequence NPA. A helical transmembrane segment spans residues 213-233; that stretch reads VYWICPFIGAMLAGWIFRVVF.

It belongs to the MIP/aquaporin (TC 1.A.8) family. SIP (TC 1.A.8.10) subfamily.

The protein resides in the membrane. In terms of biological role, aquaporins facilitate the transport of water and small neutral solutes across cell membranes. This chain is Aquaporin SIP1-1 (SIP1-1), found in Zea mays (Maize).